The following is a 256-amino-acid chain: tRNA-cytidine(32) 2-sulfurtransferase (256 aa).

The short motif at 35-40 (SGGKDS) is the PP-loop motif element. [4Fe-4S] cluster is bound by residues cysteine 110, cysteine 113, and cysteine 201.

Belongs to the TtcA family. As to quaternary structure, homodimer. It depends on Mg(2+) as a cofactor. [4Fe-4S] cluster serves as cofactor.

It localises to the cytoplasm. The enzyme catalyses cytidine(32) in tRNA + S-sulfanyl-L-cysteinyl-[cysteine desulfurase] + AH2 + ATP = 2-thiocytidine(32) in tRNA + L-cysteinyl-[cysteine desulfurase] + A + AMP + diphosphate + H(+). It functions in the pathway tRNA modification. Functionally, catalyzes the ATP-dependent 2-thiolation of cytidine in position 32 of tRNA, to form 2-thiocytidine (s(2)C32). The sulfur atoms are provided by the cysteine/cysteine desulfurase (IscS) system. This Coxiella burnetii (strain CbuG_Q212) (Coxiella burnetii (strain Q212)) protein is tRNA-cytidine(32) 2-sulfurtransferase.